A 352-amino-acid polypeptide reads, in one-letter code: Protein Wnt-11 (352 aa).

Residues 1-22 form the signal peptide; that stretch reads MKIYFLLGTFLTFLLHTRICQG. N-linked (GlcNAc...) asparagine glycosylation is found at Asn-38 and Asn-88. Disulfide bonds link Cys-78/Cys-89, Cys-128/Cys-136, Cys-138/Cys-155, Cys-207/Cys-221, and Cys-209/Cys-216. Ser-213 carries O-palmitoleoyl serine; by PORCN lipidation. Sulfotyrosine occurs at positions 273 and 280. 6 disulfide bridges follow: Cys-281–Cys-312, Cys-297–Cys-307, Cys-311–Cys-351, Cys-327–Cys-342, Cys-329–Cys-339, and Cys-334–Cys-335. Residue Asn-298 is glycosylated (N-linked (GlcNAc...) asparagine).

This sequence belongs to the Wnt family. In terms of processing, glycosylation is required for protein secretion. Post-translationally, palmitoleoylation is required for efficient binding to frizzled receptors. Depalmitoleoylation leads to Wnt signaling pathway inhibition. In terms of tissue distribution, in embryos, expressed in the neural tube, dorsal somite, mesenchymal cells within the dorsal fin, branchial arches and heart muscle, becoming expressed throughout the myocardium by the tadpole stage (stage 45). Prior to neural crest cell migration, expressed in a domain flanking the neural crest on the medial or neural (the opposite side to wnt11b). Weakly expressed in the developing pronephros from stage 25, with expression increasing from stages 30 to 35.

It is found in the secreted. Its subcellular location is the extracellular space. The protein localises to the extracellular matrix. Functionally, ligand for members of the frizzled family of seven transmembrane receptors. Shares much functionality with wnt11b. Signals through a non-canonical Wnt pathway to activate Jun-N-terminal kinase (JNK) to regulate gastrulation movements. Acts in a non-cell-autonomous manner to control neural crest migration, probably acting as an extracellular signal from surrounding tissue, but is not required for neural crest induction. Acts redundantly with wnt11b during pronephros induction. Regulates cardiac morphogenesis through the activation of JNK, but is not required for cardiac differentiation. Essential for dorsal fin development; required for an epithelial to mesenchymal transformation event prior to migration of cells into the fin, and ultimately for maintenance of fin structure. Mediates dorsal fin development through a non-canonical pathway mediated by Ca(2+). The chain is Protein Wnt-11 from Xenopus laevis (African clawed frog).